The sequence spans 178 residues: CRISPR system ring nuclease SSO2081 (178 aa).

The tract at residues 105–106 (RK) is transition state stabilizer.

The protein belongs to the cOA ring nuclease family. Homodimer. Does not require a metal cofactor. is required as a cofactor.

It is found in the cytoplasm. It carries out the reaction cyclic tetraadenylate = 2 5'-hydroxy-diadenylate 2',3'-cylic phosphate. CRISPR (clustered regularly interspaced short palindromic repeat) is an adaptive immune system that provides protection against mobile genetic elements (viruses, transposable elements and conjugative plasmids). CRISPR clusters contain spacers, sequences complementary to antecedent mobile elements, and target invading nucleic acids. CRISPR clusters are transcribed and processed into CRISPR RNA (crRNA). A nuclease that degrades cyclic oligoadenylates (cOA), second messengers that induce an antiviral state important for defense against invading nucleic acids. Destruction of cOA deactivates the Csx1 ribonuclease, preventing uncontrolled degradation of cellular RNA. Degrades cA4 (a tetraadenylate ring) into a linear diadenylate product with 5'-OH and 2',3'-cyclic phosphate termini. Is 10-fold more active than SSO1393, suggesting this is the major cA4 degradation enzyme. Is highly specific for cA4; it has very poor activity on cA6 and no discernible activity against a number of cyclic dinucleotides. There may be 2 active sites per homodimer. This is CRISPR system ring nuclease SSO2081 from Saccharolobus solfataricus (strain ATCC 35092 / DSM 1617 / JCM 11322 / P2) (Sulfolobus solfataricus).